We begin with the raw amino-acid sequence, 395 residues long: Flap endonuclease 1 (395 aa).

Positions 1–104 (MGIKQLFQII…GELAKRFQRK (104 aa)) are N-domain. Position 34 (Asp-34) interacts with Mg(2+). The DNA site is built by Arg-47 and Arg-70. Asp-86, Glu-158, Glu-160, Asp-179, and Asp-181 together coordinate Mg(2+). An I-domain region spans residues 122 to 253 (DIEKFSRRTV…TTALKLIRDH (132 aa)). A DNA-binding site is contributed by Glu-158. DNA is bound by residues Gly-231 and Asp-233. Residue Asp-233 participates in Mg(2+) binding. The segment at 341-349 (QQARLEGFF) is interaction with PCNA. The segment at 344–395 (RLEGFFKPVPKTDAQKAAHKRKLEEKNEEKKKKLKQEKKDKAAAKSKPRGAA) is disordered. Residues 365–386 (KLEEKNEEKKKKLKQEKKDKAA) are compositionally biased toward basic and acidic residues.

It belongs to the XPG/RAD2 endonuclease family. FEN1 subfamily. In terms of assembly, interacts with PCNA. Three molecules of FEN1 bind to one PCNA trimer with each molecule binding to one PCNA monomer. PCNA stimulates the nuclease activity without altering cleavage specificity. The cofactor is Mg(2+). Post-translationally, phosphorylated. Phosphorylation upon DNA damage induces relocalization to the nuclear plasma.

It is found in the nucleus. The protein localises to the nucleolus. The protein resides in the nucleoplasm. Its subcellular location is the mitochondrion. Structure-specific nuclease with 5'-flap endonuclease and 5'-3' exonuclease activities involved in DNA replication and repair. During DNA replication, cleaves the 5'-overhanging flap structure that is generated by displacement synthesis when DNA polymerase encounters the 5'-end of a downstream Okazaki fragment. It enters the flap from the 5'-end and then tracks to cleave the flap base, leaving a nick for ligation. Also involved in the long patch base excision repair (LP-BER) pathway, by cleaving within the apurinic/apyrimidinic (AP) site-terminated flap. Acts as a genome stabilization factor that prevents flaps from equilibrating into structures that lead to duplications and deletions. Also possesses 5'-3' exonuclease activity on nicked or gapped double-stranded DNA, and exhibits RNase H activity. Also involved in replication and repair of rDNA and in repairing mitochondrial DNA. This Fusarium vanettenii (strain ATCC MYA-4622 / CBS 123669 / FGSC 9596 / NRRL 45880 / 77-13-4) (Fusarium solani subsp. pisi) protein is Flap endonuclease 1.